The following is a 217-amino-acid chain: 7-cyano-7-deazaguanine synthase (217 aa).

ATP is bound at residue 10-20 (FSGGQDSTTCL). The Zn(2+) site is built by cysteine 185, cysteine 194, cysteine 197, and cysteine 200.

It belongs to the QueC family. As to quaternary structure, homodimer. Zn(2+) is required as a cofactor.

It catalyses the reaction 7-carboxy-7-deazaguanine + NH4(+) + ATP = 7-cyano-7-deazaguanine + ADP + phosphate + H2O + H(+). The protein operates within purine metabolism; 7-cyano-7-deazaguanine biosynthesis. Its function is as follows. Catalyzes the ATP-dependent conversion of 7-carboxy-7-deazaguanine (CDG) to 7-cyano-7-deazaguanine (preQ(0)). The polypeptide is 7-cyano-7-deazaguanine synthase (Streptococcus thermophilus (strain ATCC BAA-491 / LMD-9)).